A 370-amino-acid chain; its full sequence is 4-hydroxy-3-methylbut-2-en-1-yl diphosphate synthase (flavodoxin) (370 aa).

[4Fe-4S] cluster is bound by residues C270, C273, C305, and E312.

Belongs to the IspG family. [4Fe-4S] cluster is required as a cofactor.

The catalysed reaction is (2E)-4-hydroxy-3-methylbut-2-enyl diphosphate + oxidized [flavodoxin] + H2O + 2 H(+) = 2-C-methyl-D-erythritol 2,4-cyclic diphosphate + reduced [flavodoxin]. Its pathway is isoprenoid biosynthesis; isopentenyl diphosphate biosynthesis via DXP pathway; isopentenyl diphosphate from 1-deoxy-D-xylulose 5-phosphate: step 5/6. Functionally, converts 2C-methyl-D-erythritol 2,4-cyclodiphosphate (ME-2,4cPP) into 1-hydroxy-2-methyl-2-(E)-butenyl 4-diphosphate. This is 4-hydroxy-3-methylbut-2-en-1-yl diphosphate synthase (flavodoxin) from Hamiltonella defensa subsp. Acyrthosiphon pisum (strain 5AT).